The primary structure comprises 753 residues: Enhancer of polycomb-like protein 1 (753 aa).

2 disordered regions span residues M1–H75 and V429–A490. Residues L46–P71 show a composition bias toward polar residues. The span at V429–L449 shows a compositional bias: basic and acidic residues. Residues A450–Q463 show a composition bias toward low complexity.

The protein belongs to the enhancer of polycomb family. In terms of assembly, component of the NuA4 histone acetyltransferase complex.

Its subcellular location is the nucleus. In terms of biological role, component of the NuA4 histone acetyltransferase complex which is involved in transcriptional activation of selected genes principally by acetylation of nucleosomal histone H4 and H2A. The NuA4 complex is also involved in DNA repair. Involved in gene silencing by neighboring heterochromatin, blockage of the silencing spreading along the chromosome, and required for cell cycle progression through G2/M. The chain is Enhancer of polycomb-like protein 1 (EPL1) from Candida albicans (strain SC5314 / ATCC MYA-2876) (Yeast).